A 550-amino-acid chain; its full sequence is CCR4-NOT transcription complex subunit 6-like-B (550 aa).

The tract at residues 1 to 148 (MPKEKYDPPD…LYQEPDGMRK (148 aa)) is required for interaction with cnot1, cnot3 and cnot7. 4 LRR repeats span residues 52–73 (HLTVLHLSDNNLSRIPPDIAKL), 75–96 (NLVYLDLSSNKLRSLPAELGNV), 98–120 (SLRELLLNNNLLRVLPFELGRLF), and 121–143 (RLQTLGLKGNPLSQDILGLYQEP). A nuclease domain region spans residues 153–550 (MLDNLSVHPE…INGVHLPSRR (398 aa)). Glutamate 235 serves as a coordination point for Mg(2+). Residues glutamate 235, glutamate 271, histidine 355, and proline 360 each contribute to the substrate site. Aspartate 405 is a binding site for Mg(2+). Aspartate 405 acts as the Proton donor/acceptor in catalysis. Substrate-binding residues include asparagine 407, asparagine 474, and phenylalanine 479.

The protein belongs to the CCR4/nocturin family. As to quaternary structure, component of the CCR4-NOT complex. Mg(2+) serves as cofactor.

It localises to the cytoplasm. The protein localises to the nucleus. The enzyme catalyses Exonucleolytic cleavage of poly(A) to 5'-AMP.. Poly(A) nuclease with 3'-5' RNase activity. Catalytic component of the CCR4-NOT complex which is one of the major cellular mRNA deadenylases and is linked to various cellular processes including bulk mRNA degradation, miRNA-mediated repression, translational repression during translational initiation and general transcription regulation. Additional complex functions may be a consequence of its influence on mRNA expression. The polypeptide is CCR4-NOT transcription complex subunit 6-like-B (cnot6l-b) (Xenopus laevis (African clawed frog)).